A 1311-amino-acid chain; its full sequence is Clustered mitochondria protein homolog (1311 aa).

Residues 1-46 form a disordered region; that stretch reads MAATNEVIPTSENPSDVSGSSQKLATEETALANGVDHEEEDSGEAG. The segment covering 7–24 has biased composition (polar residues); that stretch reads VIPTSENPSDVSGSSQKL. The region spanning 335–579 is the Clu domain; the sequence is DITRTQENYL…RVTPLDITWM (245 aa). 2 disordered regions span residues 629-691 and 915-965; these read ERKR…QERI and QSQT…VNAS. Residues 655–691 are compositionally biased toward basic and acidic residues; that stretch reads EASKSDEPTENGELAKKADESDKDAEPSKPAADQERI. Polar residues predominate over residues 915-930; that stretch reads QSQTEAAAAPPTTNGE. 3 TPR repeats span residues 1034-1067, 1076-1109, and 1118-1151; these read ARVY…SERT, LLNY…WKVV, and ITTI…CEEV. The segment at 1236 to 1311 is disordered; sequence VSPRVTLGQT…RGGAAAAAGK (76 aa). The segment covering 1242–1253 has biased composition (polar residues); it reads LGQTQLQPQVGQ. Basic and acidic residues predominate over residues 1259-1279; it reads AGRDSRSSRGLDSRSIDELLK. The segment covering 1289-1303 has biased composition (basic residues); it reads KNKKRPGRSNPKRRG.

Belongs to the CLU family. May associate with the eukaryotic translation initiation factor 3 (eIF-3) complex.

The protein resides in the cytoplasm. Its function is as follows. mRNA-binding protein involved in proper cytoplasmic distribution of mitochondria. This Sclerotinia sclerotiorum (strain ATCC 18683 / 1980 / Ss-1) (White mold) protein is Clustered mitochondria protein homolog.